The primary structure comprises 154 residues: MGRIIFVSFGLLVVFLSLSGTGADCPSDWSSDEEHCYYVFFLLFTWEEAAKFCTQQANGGHLVSIESVEEAEFVAQLISENIKTSADYVWIGLWNQRKAPYCVSKWTDGSSVIYKNVIERFIKNCFGLEKETNYRTWFNLSCGDDYPFVCKSPA.

Residues 1 to 23 (MGRIIFVSFGLLVVFLSLSGTGA) form the signal peptide. Cystine bridges form between cysteine 25–cysteine 36, cysteine 53–cysteine 150, and cysteine 125–cysteine 142. A C-type lectin domain is found at 32 to 151 (DEEHCYYVFF…CGDDYPFVCK (120 aa)). Asparagine 139 is a glycosylation site (N-linked (GlcNAc...) asparagine).

Heterodimer with the alpha subunit (AC W5XDM0); disulfide-linked. In terms of tissue distribution, expressed by the venom gland.

Its subcellular location is the secreted. Its function is as follows. Inhibits human breast cancer cells (MDA-MB231) migration and proliferation, as well as their adhesion to fibrinogen and fibronectin. This inhibition may be due to the binding to receptors of the integrin family, probably alpha-v/beta-3 (ITGAV/ITGB3) (40% inhibition of cell adhesion) and alpha-5/beta-1 (ITGA5/ITGB1) (by comparison with lebectin). This Macrovipera lebetinus (Levantine viper) protein is Snaclec lebecin subunit beta.